Consider the following 695-residue polypeptide: MAEAPPRRLGLGPPPGDAPRAELVALTAVQSEQGEAGGGGSPRRLGLLGSPLPPGAPLPGPGSGSGSACGQRSSAAHKRYRRLQNWVYNVLERPRGWAFVYHVFIFLLVFSCLVLSVLSTIQEHQELANECLLILEFVMIVVFGLEYIVRVWSAGCCCRYRGWQGRFRFARKPFCVIDFIVFVASVAVIAAGTQGNIFATSALRSMRFLQILRMVRMDRRGGTWKLLGSVVYAHSKELITAWYIGFLVLIFASFLVYLAEKDANSDFSSYADSLWWGTITLTTIGYGDKTPHTWLGRVLAAGFALLGISFFALPAGILGSGFALKVQEQHRQKHFEKRRMPAANLIQAAWRLYSTDMSRAYLTATWYYYDSILPSFRELALLFEHVQRARNGGLRPLEVRRAPVPDGAPSRYPPVATCHRPGSTSFCPGESSRMGIKDRIRMGSSQRRTGPSKQHLAPPTMPTSPSSEQVGEATSPTKVQKSWSFNDRTRFRASLRLKPRTSAEDAPSEEVAEEKSYQCELTVDDIMPAVKTVIRSIRILKFLVAKRKFKETLRPYDVKDVIEQYSAGHLDMLGRIKSLQTRVDQIVGRGPGDRKAREKGDKGPSDAEVVDEISMMGRVVKVEKQVQSIEHKLDLLLGFYSRCLRSGTSASLGAVQVPLFDPDITSDYHSPVDHEDISVSAQTLSISRSVSTNMD.

Residues 1–21 (MAEAPPRRLGLGPPPGDAPRA) are disordered. At 1-96 (MAEAPPRRLG…VYNVLERPRG (96 aa)) the chain is on the cytoplasmic side. Arginine 93 is an a 1,2-diacyl-sn-glycero-3-phospho-(1D-myo-inositol-4,5-bisphosphate) binding site. A helical membrane pass occupies residues 97–118 (WAFVYHVFIFLLVFSCLVLSVL). Topologically, residues 119 to 129 (STIQEHQELAN) are extracellular. Residues 130–152 (ECLLILEFVMIVVFGLEYIVRVW) traverse the membrane as a helical segment. The Cytoplasmic portion of the chain corresponds to 153 to 168 (SAGCCCRYRGWQGRFR). The helical transmembrane segment at 169 to 191 (FARKPFCVIDFIVFVASVAVIAA) threads the bilayer. Lysine 172 is an a 1,2-diacyl-sn-glycero-3-phospho-(1D-myo-inositol-4,5-bisphosphate) binding site. The Extracellular segment spans residues 192 to 202 (GTQGNIFATSA). Residues 203 to 223 (LRSMRFLQILRMVRMDRRGGT) traverse the membrane as a helical; Voltage-sensor segment. A 1,2-diacyl-sn-glycero-3-phospho-(1D-myo-inositol-4,5-bisphosphate) contacts are provided by arginine 219, arginine 220, lysine 225, and serine 235. Over 224 to 235 (WKLLGSVVYAHS) the chain is Cytoplasmic. A helical transmembrane segment spans residues 236 to 258 (KELITAWYIGFLVLIFASFLVYL). The Extracellular portion of the chain corresponds to 259–270 (AEKDANSDFSSY). The segment at residues 271-292 (ADSLWWGTITLTTIGYGDKTPH) is an intramembrane region (pore-forming). Residue threonine 293 is a topological domain, extracellular. The chain crosses the membrane as a helical span at residues 294–322 (WLGRVLAAGFALLGISFFALPAGILGSGF). Residues 323–695 (ALKVQEQHRQ…ISRSVSTNMD (373 aa)) are Cytoplasmic-facing. A 1,2-diacyl-sn-glycero-3-phospho-(1D-myo-inositol-4,5-bisphosphate) is bound by residues histidine 330 and lysine 333. An interaction with CALM region spans residues 342 to 351 (AANLIQAAWR). 2 disordered regions span residues 400–480 (RRAP…TKVQ) and 496–515 (RLKP…AEEK). Polar residues-rich tracts occupy residues 443–452 (GSSQRRTGPS) and 463–480 (TSPS…TKVQ). Positions 535-549 (RSIRILKFLVAKRKF) are interaction with CALM. Residues 546–650 (KRKFKETLRP…SRCLRSGTSA (105 aa)) form a C-terminal assembly domain (tetramerization) region. Residues 587-606 (VGRGPGDRKAREKGDKGPSD) are disordered. Residues 591 to 605 (PGDRKAREKGDKGPS) show a composition bias toward basic and acidic residues. Residues 615–636 (MMGRVVKVEKQVQSIEHKLDLL) are a coiled coil.

This sequence belongs to the potassium channel family. KQT (TC 1.A.1.15) subfamily. Kv7.4/KCNQ4 sub-subfamily. In terms of assembly, homotetramer. Interacts (via C-terminus) with calmodulin; forms a heterooctameric structure (with 4:4 KCNQ1:CALM stoichiometry); the interaction is calcium-independent, constitutive, participates in the proper assembly of a functional channel. The interaction with calcium-free CALM controls channel trafficking whereas interaction with calcium-bound CALM regulates channel gating. May form a functional heteromultimeric channel with KCNQ3. Interacts with HSP90AB1; promotes cell surface expression of KCNQ4. In terms of tissue distribution, expressed in the outer, but not the inner, sensory hair cells of the cochlea. Slightly expressed in heart, brain and skeletal muscle.

It is found in the basal cell membrane. The enzyme catalyses K(+)(in) = K(+)(out). With respect to regulation, two molecules of phosphatidylinositol-4,5-bisphosphate (PIP2-I and PIP2-II) are essential to activate KCNQ4 channel by inducing the coupling of the voltage-sensing domain (VSD) and the pore-forming domain (PD). Upon channel activation, PIP2-I and PIP2-II disrupt the VSD-calmodulin/CALM interaction, causing the release of CALM from the VSD which triggers the opening of the gate. Calcium suppresses KCNQ4 channel current through calcium-bound CALM C-terminus. Therefore CALM acts as calcium sensor that controls channel activity. ML213 potentiates KCNQ4 channel. KCNQ4 channel is blocked by linopirdin, XE991 and bepridil, whereas clofilium is without significant effect. Muscarinic agonist oxotremorine-M strongly suppress KCNQ4 current in CHO cells in which cloned KCNQ4 channels were coexpressed with M1 muscarinic receptors. Functionally, pore-forming subunit of the voltage-gated potassium (Kv) channel involved in the regulation of sensory cells excitability in the cochlea. KCNQ4/Kv7.4 channel is composed of 4 pore-forming subunits assembled as tetramers. Promotes the outflow of potassium ions in the repolarization phase of action potential which plays a role in regulating membrane potential of excitable cells. The channel conducts a slowly activating and deactivating current. Current often shows some inward rectification at positive potentials. Channel may be selectively permeable in vitro to other cations besides potassium, in decreasing order of affinity K(+) = Rb(+) &gt; Cs(+) &gt; Na(+). Important for normal physiological function of inner ear such as sensory perception of sound. The sequence is that of Potassium voltage-gated channel subfamily KQT member 4 from Homo sapiens (Human).